The following is a 350-amino-acid chain: Cobalt-precorrin-5B C(1)-methyltransferase (350 aa).

It belongs to the CbiD family.

It catalyses the reaction Co-precorrin-5B + S-adenosyl-L-methionine = Co-precorrin-6A + S-adenosyl-L-homocysteine. The protein operates within cofactor biosynthesis; adenosylcobalamin biosynthesis; cob(II)yrinate a,c-diamide from sirohydrochlorin (anaerobic route): step 6/10. Functionally, catalyzes the methylation of C-1 in cobalt-precorrin-5B to form cobalt-precorrin-6A. In Syntrophotalea carbinolica (strain DSM 2380 / NBRC 103641 / GraBd1) (Pelobacter carbinolicus), this protein is Cobalt-precorrin-5B C(1)-methyltransferase.